The primary structure comprises 80 residues: MQNKGVVLTLFLVVSMAIVISSTKEKRAVIQKKYVDFKDRKYPWKEECFETCARTFTNGDQSKVSEVVPDYFKCICYVLI.

Positions 1–22 (MQNKGVVLTLFLVVSMAIVISS) are cleaved as a signal peptide.

The protein belongs to the scoloptoxin-15 family. Post-translationally, contains 2 disulfide bonds. In terms of tissue distribution, expressed by the venom gland.

Its subcellular location is the secreted. This is U-scoloptoxin(15)-Er1a from Ethmostigmus rubripes (Giant centipede).